The primary structure comprises 106 residues: Starvation responsive small protein A (106 aa).

The chain crosses the membrane as a helical span at residues 15–32 (ILLVNAGLISAYGVRIIF).

The protein resides in the cell membrane. Functionally, involved in starvation response and aggregation stage of the life cycle. May be involved in fruiting body morphogenesis and spore formation. The chain is Starvation responsive small protein A from Dictyostelium discoideum (Social amoeba).